The following is a 514-amino-acid chain: Bifunctional purine biosynthesis protein PurH (514 aa).

Residues 1 to 146 form the MGS-like domain; the sequence is MARLALLSVS…KNFAHLAVLC (146 aa).

Belongs to the PurH family.

It catalyses the reaction (6R)-10-formyltetrahydrofolate + 5-amino-1-(5-phospho-beta-D-ribosyl)imidazole-4-carboxamide = 5-formamido-1-(5-phospho-D-ribosyl)imidazole-4-carboxamide + (6S)-5,6,7,8-tetrahydrofolate. The enzyme catalyses IMP + H2O = 5-formamido-1-(5-phospho-D-ribosyl)imidazole-4-carboxamide. The protein operates within purine metabolism; IMP biosynthesis via de novo pathway; 5-formamido-1-(5-phospho-D-ribosyl)imidazole-4-carboxamide from 5-amino-1-(5-phospho-D-ribosyl)imidazole-4-carboxamide (10-formyl THF route): step 1/1. Its pathway is purine metabolism; IMP biosynthesis via de novo pathway; IMP from 5-formamido-1-(5-phospho-D-ribosyl)imidazole-4-carboxamide: step 1/1. The protein is Bifunctional purine biosynthesis protein PurH of Nostoc punctiforme (strain ATCC 29133 / PCC 73102).